Consider the following 665-residue polypeptide: Protein LOW PHOTOSYNTHETIC EFFICIENCY 1, chloroplastic (665 aa).

A chloroplast-targeting transit peptide spans 1-68 (MQALSILPLK…VSSNRKVLFL (68 aa)). PPR repeat units follow at residues 145–179 (PLQV…KSES), 181–217 (GVIG…GIVP), 218–252 (NIVT…GFEP), 253–283 (NPIT…LREK), 309–344 (GRIC…GVRP), 345–375 (SREE…IRER), 380–414 (SLSV…GPEP), 422–456 (VVSH…GLKP), 457–491 (QRRH…GEKP), 492–526 (TVIS…GIEP), 527–561 (NLYA…GIEP), 562–596 (SVVT…NVEP), and 597–631 (NEIT…GLKL).

It belongs to the PPR family. P subfamily. In terms of assembly, interacts with HCF173.

It localises to the plastid. It is found in the chloroplast thylakoid membrane. Its subcellular location is the chloroplast stroma. Functionally, required for light-regulated photosystem II (PSII) biogenesis and grana thylakoids formation by binding to the 5' UTR of PSII subunit mRNAs (e.g. psbJ, psbN and psbA) in a light-dependent manner through a redox-based mechanism, and facilitating the association of HCF173 with target mRNAs, which encodes PSII reaction center proteins (e.g. J, N and D1), thus regulating its expression by modulating ribosome loading. This chain is Protein LOW PHOTOSYNTHETIC EFFICIENCY 1, chloroplastic, found in Arabidopsis thaliana (Mouse-ear cress).